The sequence spans 506 residues: Glycerol kinase (506 aa).

Residue T14 coordinates ADP. ATP-binding residues include T14, T15, and S16. T14 serves as a coordination point for sn-glycerol 3-phosphate. R18 is a binding site for ADP. 3 residues coordinate sn-glycerol 3-phosphate: R84, E85, and Y136. Glycerol contacts are provided by R84, E85, and Y136. H232 is modified (phosphohistidine; by HPr). Residue D246 participates in sn-glycerol 3-phosphate binding. Glycerol contacts are provided by D246 and Q247. ADP is bound by residues T268 and G311. ATP-binding residues include T268, G311, Q315, and G412. ADP contacts are provided by G412 and N416.

Belongs to the FGGY kinase family. In terms of assembly, homotetramer and homodimer (in equilibrium). Post-translationally, the phosphoenolpyruvate-dependent sugar phosphotransferase system (PTS), including enzyme I, and histidine-containing protein (HPr) are required for the phosphorylation of His-232, which leads to the activation of the enzyme.

It catalyses the reaction glycerol + ATP = sn-glycerol 3-phosphate + ADP + H(+). The protein operates within polyol metabolism; glycerol degradation via glycerol kinase pathway; sn-glycerol 3-phosphate from glycerol: step 1/1. Activated by phosphorylation and inhibited by fructose 1,6-bisphosphate (FBP). Its function is as follows. Key enzyme in the regulation of glycerol uptake and metabolism. Catalyzes the phosphorylation of glycerol to yield sn-glycerol 3-phosphate. This chain is Glycerol kinase, found in Enterococcus casseliflavus (Enterococcus flavescens).